A 121-amino-acid polypeptide reads, in one-letter code: Small ribosomal subunit protein bS16m (121 aa).

Belongs to the bacterial ribosomal protein bS16 family. As to quaternary structure, component of the mitochondrial small ribosomal subunit (mt-SSU). Mature yeast 74S mitochondrial ribosomes consist of a small (37S) and a large (54S) subunit. The 37S small subunit contains a 15S ribosomal RNA (15S mt-rRNA) and 34 different proteins. The 54S large subunit contains a 21S rRNA (21S mt-rRNA) and 46 different proteins.

It localises to the mitochondrion. Component of the mitochondrial ribosome (mitoribosome), a dedicated translation machinery responsible for the synthesis of mitochondrial genome-encoded proteins, including at least some of the essential transmembrane subunits of the mitochondrial respiratory chain. The mitoribosomes are attached to the mitochondrial inner membrane and translation products are cotranslationally integrated into the membrane. This Saccharomyces cerevisiae (strain ATCC 204508 / S288c) (Baker's yeast) protein is Small ribosomal subunit protein bS16m (MRPS16).